The sequence spans 367 residues: Glutamate 5-kinase (367 aa).

Residue lysine 10 coordinates ATP. The substrate site is built by serine 50, aspartate 137, and asparagine 149. Residues 169-170 (TD) and 211-217 (TGGMGTK) contribute to the ATP site. In terms of domain architecture, PUA spans 275 to 353 (AGEITVDDGA…QEISEILGYE (79 aa)).

It belongs to the glutamate 5-kinase family.

The protein resides in the cytoplasm. It catalyses the reaction L-glutamate + ATP = L-glutamyl 5-phosphate + ADP. It participates in amino-acid biosynthesis; L-proline biosynthesis; L-glutamate 5-semialdehyde from L-glutamate: step 1/2. In terms of biological role, catalyzes the transfer of a phosphate group to glutamate to form L-glutamate 5-phosphate. The protein is Glutamate 5-kinase of Serratia proteamaculans (strain 568).